A 327-amino-acid chain; its full sequence is Tyrosine--tRNA ligase (327 aa).

L-tyrosine is bound at residue Tyr-33. The short motif at Pro-38–His-46 is the 'HIGH' region element. The L-tyrosine site is built by Tyr-154, Gln-158, Asp-161, and Gln-176. The 'KMSKS' region signature appears at Lys-212 to Ser-216. Residue Ser-215 participates in ATP binding.

It belongs to the class-I aminoacyl-tRNA synthetase family. TyrS type 3 subfamily. As to quaternary structure, homodimer.

The protein localises to the cytoplasm. It carries out the reaction tRNA(Tyr) + L-tyrosine + ATP = L-tyrosyl-tRNA(Tyr) + AMP + diphosphate + H(+). Its function is as follows. Catalyzes the attachment of tyrosine to tRNA(Tyr) in a two-step reaction: tyrosine is first activated by ATP to form Tyr-AMP and then transferred to the acceptor end of tRNA(Tyr). The sequence is that of Tyrosine--tRNA ligase from Halobacterium salinarum (strain ATCC 29341 / DSM 671 / R1).